Here is a 155-residue protein sequence, read N- to C-terminus: Ribonuclease H (155 aa).

The RNase H type-1 domain occupies 1-142 (MLKQVEIFTD…CDELARAAAS (142 aa)). Residues Asp10, Glu48, Asp70, and Asp134 each contribute to the Mg(2+) site.

It belongs to the RNase H family. Monomer. Mg(2+) is required as a cofactor.

The protein resides in the cytoplasm. It carries out the reaction Endonucleolytic cleavage to 5'-phosphomonoester.. Functionally, endonuclease that specifically degrades the RNA of RNA-DNA hybrids. The protein is Ribonuclease H of Klebsiella pneumoniae subsp. pneumoniae (strain ATCC 700721 / MGH 78578).